Here is a 278-residue protein sequence, read N- to C-terminus: Envelope glycoprotein L (278 aa).

The N-terminal stretch at 1–30 is a signal peptide; the sequence is MCRRPDCGFSFSPGPVVLLWCCLLLPIVSS. A gL betaherpesvirus-type domain is found at 43–256; that stretch reads VPAECPELTR…DKYYAGLPPE (214 aa). Cysteine 154 and cysteine 159 form a disulfide bridge.

The protein belongs to the herpesviridae glycoprotein L (gL) family. Betaherpesvirinae gL subfamily. As to quaternary structure, interacts with glycoprotein H (gH); this interaction is necessary for the correct processing and cell surface expression of gH. Forms the envelope pentamer complex (PC) composed of gH, gL, UL128, UL130, and UL131A. The pentamer interacts with host NRP2. Forms the envelope trimer complex composed of gH, gL, and gO. The trimer interacts with host PDGFRA. The trimer also interacts with host EPHA2.

It is found in the virion membrane. It localises to the host cell membrane. Its subcellular location is the host Golgi apparatus. The protein resides in the host trans-Golgi network. The heterodimer glycoprotein H-glycoprotein L is required for the fusion of viral and plasma membranes leading to virus entry into the host cell. Acts as a functional inhibitor of gH and maintains gH in an inhibited form. Upon binding to host integrins, gL dissociates from gH leading to activation of the viral fusion glycoproteins gB and gH. In human cytomegalovirus, forms two distincts complexes to mediate viral entry, a trimer and a pentamer at the surface of the virion envelope. The gH-gL-gO trimer is required for infection in fibroblasts by interacting with host PDGFRA, and in glioblastoma cells by interacting with host EPHA2. The gH-gL-UL128-UL130-UL131A pentamer is essential for viral entry in epithelial, endothelial and myeloid cells via interaction with host NRP2. The sequence is that of Envelope glycoprotein L from Human cytomegalovirus (strain 5040) (HHV-5).